The sequence spans 528 residues: Na(+)/H(+) antiporter NhaB (528 aa).

Helical transmembrane passes span 28–50, 67–87, 98–118, 140–160, 240–260, 305–325, 350–370, 391–411, 449–469, and 476–496; these read FLVINPLLFFYVSPFVAGWVLVV, PGGLLAIQAVFIGMTSPSQVL, LLLVFMVAGIYFMKQLLLFVF, AFLSAFLDALTVIAVIIAVAV, FFLRMSPVTMPVLVAGIFTCF, ALIGVWLIAGLALHLASVGLI, EEALPFTALLAVFFAIVGVII, LVIFYIANGLLSMVSDNVFVG, ATPNGQAAFLFLLTSAIAPLI, and MVWMALPYTIVLSIVGVMAIE.

Belongs to the NhaB Na(+)/H(+) (TC 2.A.34) antiporter family.

It is found in the cell inner membrane. It catalyses the reaction 2 Na(+)(in) + 3 H(+)(out) = 2 Na(+)(out) + 3 H(+)(in). Na(+)/H(+) antiporter that extrudes sodium in exchange for external protons. This is Na(+)/H(+) antiporter NhaB from Shewanella frigidimarina (strain NCIMB 400).